Here is a 179-residue protein sequence, read N- to C-terminus: Cell division protein ZapC (179 aa).

Belongs to the ZapC family. As to quaternary structure, interacts directly with FtsZ.

It localises to the cytoplasm. Functionally, contributes to the efficiency of the cell division process by stabilizing the polymeric form of the cell division protein FtsZ. Acts by promoting interactions between FtsZ protofilaments and suppressing the GTPase activity of FtsZ. This Aliivibrio salmonicida (strain LFI1238) (Vibrio salmonicida (strain LFI1238)) protein is Cell division protein ZapC.